A 325-amino-acid polypeptide reads, in one-letter code: UPF0285 protein MA_3856 (325 aa).

The protein belongs to the UPF0285 family.

The sequence is that of UPF0285 protein MA_3856 from Methanosarcina acetivorans (strain ATCC 35395 / DSM 2834 / JCM 12185 / C2A).